The sequence spans 362 residues: MLKDLNTNQGLKPWRVESVFYCIVIVLIFIGAFKIAEAVFKPLAISIVLGFLVYPVYTFLARFKVPKFLIVFIIFFLLFSFSYLIFSFVYYSVTVLMKQLPYYQNQLAFIMKDVLSRYKVDSSVINDVNFSGYIYPFLTRAYNEIIGFTSSLVVVFLLLYFLLSEIHVFEMKLDKAFKKPISTRFIGALDTINNQIGKYLGIKILVSCLTGILVFIGLTLFGQDFPLVWAVLSFVFNFIPSIGSILAVFFIVITSLIQFYPNLNIVLYVFIYNTSIQMLIGNILEPKMQGKRLDISPFLLLCFLFFWGWLWGIVGLLISYPFTVIVKVIVDNVSWLKSFSVFLGGSEILSNISHISSKDKEI.

Transmembrane regions (helical) follow at residues 20-40, 43-63, 68-88, 144-164, 212-232, 234-254, 265-285, and 304-326; these read FYCIVIVLIFIGAFKIAEAVF, LAISIVLGFLVYPVYTFLARF, FLIVFIIFFLLFSFSYLIFSF, EIIGFTSSLVVVFLLLYFLLS, ILVFIGLTLFGQDFPLVWAVL, FVFNFIPSIGSILAVFFIVIT, IVLYVFIYNTSIQMLIGNILE, and LFFWGWLWGIVGLLISYPFTVIV.

Belongs to the autoinducer-2 exporter (AI-2E) (TC 2.A.86) family.

It is found in the cell membrane. This Borreliella burgdorferi (strain ATCC 35210 / DSM 4680 / CIP 102532 / B31) (Borrelia burgdorferi) protein is Putative transport protein BB_0006.